The chain runs to 310 residues: Ribosomal RNA small subunit methyltransferase H (310 aa).

S-adenosyl-L-methionine is bound by residues A32–H34, D51, F78, D99, and Q106.

Belongs to the methyltransferase superfamily. RsmH family.

It localises to the cytoplasm. The enzyme catalyses cytidine(1402) in 16S rRNA + S-adenosyl-L-methionine = N(4)-methylcytidine(1402) in 16S rRNA + S-adenosyl-L-homocysteine + H(+). Its function is as follows. Specifically methylates the N4 position of cytidine in position 1402 (C1402) of 16S rRNA. The protein is Ribosomal RNA small subunit methyltransferase H of Macrococcus caseolyticus (strain JCSC5402) (Macrococcoides caseolyticum).